Here is a 557-residue protein sequence, read N- to C-terminus: Eudesmanediol synthase (557 aa).

2 residues coordinate Mg(2+): D310 and D314. Positions 310, 314, 450, and 453 each coordinate substrate. Residues 310–314 carry the DDXXD motif motif; it reads DDTFD. Residues N453 and S457 each contribute to the Mg(2+) site.

It belongs to the terpene synthase family. In terms of assembly, monomer. Mg(2+) serves as cofactor. Requires Mn(2+) as cofactor. Specifically expressed in roots.

It is found in the cytoplasm. The catalysed reaction is (2E,6E)-farnesyl diphosphate + 2 H2O = 7-epi-ent-eudesmane-5,11-diol + diphosphate. Its pathway is secondary metabolite biosynthesis; terpenoid biosynthesis. Its function is as follows. Component of the volatile terpenes biosynthesis pathways. Dihydroxylated sesquiterpenoid synthase that generates dually hydroxylated products directly from (E,E)-farnesyl diphosphate, primarily eudesmane-2,11-diol, along with two closely related structural isomers. This Zea mays (Maize) protein is Eudesmanediol synthase.